Consider the following 585-residue polypeptide: Arginine--tRNA ligase (585 aa).

Residues 131–141 carry the 'HIGH' region motif; the sequence is ANPTGPMHVGH.

The protein belongs to the class-I aminoacyl-tRNA synthetase family. As to quaternary structure, monomer.

The protein resides in the cytoplasm. The enzyme catalyses tRNA(Arg) + L-arginine + ATP = L-arginyl-tRNA(Arg) + AMP + diphosphate. This is Arginine--tRNA ligase from Rhizobium meliloti (strain 1021) (Ensifer meliloti).